A 268-amino-acid polypeptide reads, in one-letter code: Tryptophan synthase alpha chain (268 aa).

Active-site proton acceptor residues include Glu49 and Asp60.

This sequence belongs to the TrpA family. In terms of assembly, tetramer of two alpha and two beta chains.

It catalyses the reaction (1S,2R)-1-C-(indol-3-yl)glycerol 3-phosphate + L-serine = D-glyceraldehyde 3-phosphate + L-tryptophan + H2O. The protein operates within amino-acid biosynthesis; L-tryptophan biosynthesis; L-tryptophan from chorismate: step 5/5. In terms of biological role, the alpha subunit is responsible for the aldol cleavage of indoleglycerol phosphate to indole and glyceraldehyde 3-phosphate. This chain is Tryptophan synthase alpha chain, found in Aeromonas salmonicida (strain A449).